A 367-amino-acid polypeptide reads, in one-letter code: bZIP transcription factor 18 (367 aa).

The segment at 1 to 57 is disordered; the sequence is MEDPSNPQPNQSNLSQCPPLATAPTPAPVRGPYHRRAHSEVQFRLPEDLDLSEPFGG. Over residues 38-47 the composition is skewed to basic and acidic residues; the sequence is HSEVQFRLPE. S70 is subject to Phosphoserine. The tract at residues 79–124 is disordered; the sequence is SGSGSASDSAGPSAPRSDNPFSAENGGAEAGNSRPRHRHSLSVDGS. A compositionally biased stretch (low complexity) spans 82–96; the sequence is GSASDSAGPSAPRSD. A bZIP domain is found at 148-211; it reads DPKRAKRIIA…TGLSSENTEL (64 aa). Residues 150 to 171 are basic motif; it reads KRAKRIIANRQSAARSKERKAR. Positions 166 to 245 form a coiled coil; the sequence is KERKARYILE…VERLKFATGE (80 aa). A leucine-zipper region spans residues 176–190; the sequence is LERKVQTLQTEATTL. Polar residues-rich tracts occupy residues 294–309, 317–328, and 354–367; these read QPNN…NPPT, ATSNAPAQSHSY, and FGRS…SSTM. Disordered stretches follow at residues 294–330 and 343–367; these read QPNN…SYSE and LDIS…SSTM.

As to quaternary structure, interacts with NEAP1. Forms homodimer and heterodimer with bZIP34 and bZIP61. Ubiquitous. Strongly expressed in mature pollen.

Its subcellular location is the nucleus. It localises to the nucleoplasm. The protein resides in the cytoplasm. The protein localises to the perinuclear region. Its function is as follows. Transcription factor that may participate with bZIP34 in the gametophytic control of pollen development. This Arabidopsis thaliana (Mouse-ear cress) protein is bZIP transcription factor 18.